A 583-amino-acid polypeptide reads, in one-letter code: Interactor of constitutive active ROPs 2, chloroplastic (583 aa).

A chloroplast-targeting transit peptide spans 1-55 (MQTPKPRPGSLEVPQKKSPASTPKTARKLKTSESDPVSSPNTKIRTPKTQSPKVV). 2 disordered regions span residues 1–80 (MQTP…PELA) and 101–125 (EALKKEAQDQAEETKQQLMEINASE). Polar residues predominate over residues 34–52 (SDPVSSPNTKIRTPKTQSP). Coiled-coil stretches lie at residues 74–207 (GKTP…DAKE) and 238–516 (MKMS…AAAT). Over residues 102–115 (ALKKEAQDQAEETK) the composition is skewed to basic and acidic residues. A disordered region spans residues 518–583 (LSGGNNNNNS…IGVLLKKSQK (66 aa)). A compositionally biased stretch (low complexity) spans 519–529 (SGGNNNNNSNG). Position 540 is a phosphoserine (S540).

It belongs to the ICR family. As to quaternary structure, interacts with ARAC8, ARAC11 and KIN13A in vitro, but not with ICR1 or SEC3A.

It localises to the plastid. Its subcellular location is the chloroplast. Functionally, acts as a scaffold, mediating interaction of ROPs with different proteins. This chain is Interactor of constitutive active ROPs 2, chloroplastic (ICR2), found in Arabidopsis thaliana (Mouse-ear cress).